The chain runs to 298 residues: Glutamyl-Q tRNA(Asp) synthetase (298 aa).

L-glutamate-binding positions include 9-13 (RFAPS) and glutamate 45. The short motif at 12-22 (PSPSGELHFGS) is the 'HIGH' region element. Zn(2+) is bound by residues cysteine 101, cysteine 103, tyrosine 115, and cysteine 119. L-glutamate-binding residues include tyrosine 172 and arginine 190. Positions 228–232 (KLSKQ) match the 'KMSKS' region motif. Residue lysine 231 coordinates ATP.

The protein belongs to the class-I aminoacyl-tRNA synthetase family. GluQ subfamily. It depends on Zn(2+) as a cofactor.

Its function is as follows. Catalyzes the tRNA-independent activation of glutamate in presence of ATP and the subsequent transfer of glutamate onto a tRNA(Asp). Glutamate is transferred on the 2-amino-5-(4,5-dihydroxy-2-cyclopenten-1-yl) moiety of the queuosine in the wobble position of the QUC anticodon. In Salmonella choleraesuis (strain SC-B67), this protein is Glutamyl-Q tRNA(Asp) synthetase.